The primary structure comprises 40 residues: Metallothionein-1 (40 aa).

The protein belongs to the metallothionein superfamily. Type 5 family.

Functionally, this protein binds cations of several transition elements. It is thought to be involved in detoxification processes. The protein is Metallothionein-1 (MtnA) of Drosophila melanogaster (Fruit fly).